The chain runs to 240 residues: Nicotinamide riboside kinase (240 aa).

Residue 13–21 (GCSSSGKTT) coordinates ATP. Positions 20 and 39 each coordinate Mg(2+). The Proton acceptor role is filled by aspartate 39. Substrate contacts are provided by residues 39 to 42 (DDFY) and 59 to 60 (WD). Arginine 158 provides a ligand contact to ATP. Residues arginine 159 and 164-165 (GY) contribute to the substrate site. ATP contacts are provided by residues 162–164 (RKG) and 208–210 (KSK).

The protein belongs to the uridine kinase family. NRK subfamily.

The enzyme catalyses beta-nicotinamide D-riboside + ATP = beta-nicotinamide D-ribonucleotide + ADP + H(+). It carries out the reaction beta-D-ribosylnicotinate + ATP = nicotinate beta-D-ribonucleotide + ADP + H(+). The protein operates within cofactor biosynthesis; NAD(+) biosynthesis. Functionally, catalyzes the phosphorylation of nicotinamide riboside (NR) and nicotinic acid riboside (NaR) to form nicotinamide mononucleotide (NMN) and nicotinic acid mononucleotide (NaMN). This is Nicotinamide riboside kinase (NRK1) from Saccharomyces cerevisiae (strain ATCC 204508 / S288c) (Baker's yeast).